Consider the following 411-residue polypeptide: Glucose-1-phosphate adenylyltransferase (411 aa).

Residues Gly-161, 176 to 177 (EK), and Ser-195 each bind alpha-D-glucose 1-phosphate.

The protein belongs to the bacterial/plant glucose-1-phosphate adenylyltransferase family. Homotetramer.

It carries out the reaction alpha-D-glucose 1-phosphate + ATP + H(+) = ADP-alpha-D-glucose + diphosphate. It functions in the pathway glycan biosynthesis; glycogen biosynthesis. Functionally, involved in the biosynthesis of ADP-glucose, a building block required for the elongation reactions to produce glycogen. Catalyzes the reaction between ATP and alpha-D-glucose 1-phosphate (G1P) to produce pyrophosphate and ADP-Glc. The protein is Glucose-1-phosphate adenylyltransferase of Anaeromyxobacter sp. (strain Fw109-5).